The primary structure comprises 64 residues: Large ribosomal subunit protein bL35 (64 aa).

Positions 1–55 (MPKMKTNKSVSARFKLTASGQLKRTRPGKRHKLSKKSSQEKRNLSKQPLVDKGQV) are disordered. The segment covering 23–35 (KRTRPGKRHKLSK) has biased composition (basic residues).

The protein belongs to the bacterial ribosomal protein bL35 family.

The protein is Large ribosomal subunit protein bL35 of Chlamydia pneumoniae (Chlamydophila pneumoniae).